A 201-amino-acid polypeptide reads, in one-letter code: Adenylyl-sulfate kinase (201 aa).

35-42 lines the ATP pocket; that stretch reads GLSGSGKS. Catalysis depends on Ser109, which acts as the Phosphoserine intermediate.

This sequence belongs to the APS kinase family.

The enzyme catalyses adenosine 5'-phosphosulfate + ATP = 3'-phosphoadenylyl sulfate + ADP + H(+). It participates in sulfur metabolism; hydrogen sulfide biosynthesis; sulfite from sulfate: step 2/3. In terms of biological role, catalyzes the synthesis of activated sulfate. This is Adenylyl-sulfate kinase from Escherichia coli (strain ATCC 8739 / DSM 1576 / NBRC 3972 / NCIMB 8545 / WDCM 00012 / Crooks).